The following is a 215-amino-acid chain: Probable GTP-binding protein EngB (215 aa).

Residues 31-215 (GPPEIAFAGR…RTAILQAVVQ (185 aa)) form the EngB-type G domain. GTP is bound by residues 39-46 (GRSNVGKS), 66-70 (GRTQE), 93-96 (DMPG), 160-163 (TKSD), and 194-196 (TSA). Serine 46 and threonine 68 together coordinate Mg(2+).

It belongs to the TRAFAC class TrmE-Era-EngA-EngB-Septin-like GTPase superfamily. EngB GTPase family. It depends on Mg(2+) as a cofactor.

In terms of biological role, necessary for normal cell division and for the maintenance of normal septation. This chain is Probable GTP-binding protein EngB, found in Bartonella bacilliformis (strain ATCC 35685 / KC583 / Herrer 020/F12,63).